The primary structure comprises 197 residues: Predicted GPI-anchored protein 34 (197 aa).

The first 20 residues, 1-20 (MKFTSLICSSILLIIPTVMA), serve as a signal peptide directing secretion. N-linked (GlcNAc...) asparagine glycosylation is found at Asn-110, Asn-114, and Asn-152. A lipid anchor (GPI-anchor amidated glycine) is attached at Gly-169. Residues 170-197 (AAAMAGPVPILTNSIFTAGLLALAAVLL) constitute a propeptide, removed in mature form.

The protein localises to the cell membrane. Its function is as follows. Predicted GPI-anchored protein which may have a role during host infection. The protein is Predicted GPI-anchored protein 34 (PGA34) of Candida albicans (strain SC5314 / ATCC MYA-2876) (Yeast).